Here is a 416-residue protein sequence, read N- to C-terminus: Gamma-glutamyl phosphate reductase (416 aa).

The protein belongs to the gamma-glutamyl phosphate reductase family.

The protein resides in the cytoplasm. It carries out the reaction L-glutamate 5-semialdehyde + phosphate + NADP(+) = L-glutamyl 5-phosphate + NADPH + H(+). The protein operates within amino-acid biosynthesis; L-proline biosynthesis; L-glutamate 5-semialdehyde from L-glutamate: step 2/2. Functionally, catalyzes the NADPH-dependent reduction of L-glutamate 5-phosphate into L-glutamate 5-semialdehyde and phosphate. The product spontaneously undergoes cyclization to form 1-pyrroline-5-carboxylate. The protein is Gamma-glutamyl phosphate reductase of Vibrio cholerae serotype O1 (strain ATCC 39541 / Classical Ogawa 395 / O395).